A 372-amino-acid polypeptide reads, in one-letter code: Histidinol-phosphate aminotransferase (372 aa).

K230 carries the N6-(pyridoxal phosphate)lysine modification.

It belongs to the class-II pyridoxal-phosphate-dependent aminotransferase family. Histidinol-phosphate aminotransferase subfamily. As to quaternary structure, homodimer. Pyridoxal 5'-phosphate is required as a cofactor.

It catalyses the reaction L-histidinol phosphate + 2-oxoglutarate = 3-(imidazol-4-yl)-2-oxopropyl phosphate + L-glutamate. It participates in amino-acid biosynthesis; L-histidine biosynthesis; L-histidine from 5-phospho-alpha-D-ribose 1-diphosphate: step 7/9. The protein is Histidinol-phosphate aminotransferase of Paenarthrobacter aurescens (strain TC1).